We begin with the raw amino-acid sequence, 76 residues long: Glutathione S-transferase (76 aa).

Positions X1–L40 constitute a GST N-terminal domain. The GST C-terminal domain maps to L41–V76.

It belongs to the GST superfamily. Theta family.

It is found in the cytoplasm. It catalyses the reaction RX + glutathione = an S-substituted glutathione + a halide anion + H(+). Functionally, conjugation of reduced glutathione to a wide number of exogenous and endogenous hydrophobic electrophiles. This is Glutathione S-transferase from Brassica oleracea var. italica (Broccoli).